Consider the following 429-residue polypeptide: 3-phosphoshikimate 1-carboxyvinyltransferase (429 aa).

Residues Lys23, Ser24, and Arg28 each contribute to the 3-phosphoshikimate site. Lys23 lines the phosphoenolpyruvate pocket. Phosphoenolpyruvate is bound by residues Gly95 and Arg123. 3-phosphoshikimate-binding residues include Ser168, Gln170, Asp316, and Lys343. Gln170 contacts phosphoenolpyruvate. The active-site Proton acceptor is Asp316. Phosphoenolpyruvate contacts are provided by Arg347 and Arg389.

It belongs to the EPSP synthase family. As to quaternary structure, monomer.

Its subcellular location is the cytoplasm. It catalyses the reaction 3-phosphoshikimate + phosphoenolpyruvate = 5-O-(1-carboxyvinyl)-3-phosphoshikimate + phosphate. The protein operates within metabolic intermediate biosynthesis; chorismate biosynthesis; chorismate from D-erythrose 4-phosphate and phosphoenolpyruvate: step 6/7. In terms of biological role, catalyzes the transfer of the enolpyruvyl moiety of phosphoenolpyruvate (PEP) to the 5-hydroxyl of shikimate-3-phosphate (S3P) to produce enolpyruvyl shikimate-3-phosphate and inorganic phosphate. This Bacillus cereus (strain B4264) protein is 3-phosphoshikimate 1-carboxyvinyltransferase.